Here is a 170-residue protein sequence, read N- to C-terminus: Ribosome maturation factor RimM (170 aa).

The PRC barrel domain occupies histidine 97–phenylalanine 170.

This sequence belongs to the RimM family. In terms of assembly, binds ribosomal protein uS19.

The protein localises to the cytoplasm. In terms of biological role, an accessory protein needed during the final step in the assembly of 30S ribosomal subunit, possibly for assembly of the head region. Essential for efficient processing of 16S rRNA. May be needed both before and after RbfA during the maturation of 16S rRNA. It has affinity for free ribosomal 30S subunits but not for 70S ribosomes. This chain is Ribosome maturation factor RimM, found in Xylella fastidiosa (strain M23).